A 93-amino-acid polypeptide reads, in one-letter code: Small ribosomal subunit protein uS19 (93 aa).

The protein belongs to the universal ribosomal protein uS19 family.

Functionally, protein S19 forms a complex with S13 that binds strongly to the 16S ribosomal RNA. This Campylobacter lari (strain RM2100 / D67 / ATCC BAA-1060) protein is Small ribosomal subunit protein uS19.